The primary structure comprises 92 residues: Small ribosomal subunit protein uS19c (92 aa).

This sequence belongs to the universal ribosomal protein uS19 family.

It localises to the plastid. The protein resides in the chloroplast. Functionally, protein S19 forms a complex with S13 that binds strongly to the 16S ribosomal RNA. This chain is Small ribosomal subunit protein uS19c, found in Piper cenocladum (Ant piper).